A 447-amino-acid chain; its full sequence is MGIETEFGVTCTFHGHRRLSPDEVARYLFRRVVSWGRSSNVFLRNGARLYLDVGSHPEYATAECDSLIQLVNHDRAGERVLEELLIDAEARLAEEGIGGDIYLFKNNTDSAGNSYGCHENFLVARAGEFSRISDVLLPFLVTRQLICGAGKVLQTPKAATFCLSQRAEHIWEGVSSATTRSRPIINTRDEPHADAEKYRRLHVIVGDSNMAETTTMLKVGSAALVLEMIEAGVSFRDFALDNPIRAIREVSHDVTGKKPVRLAGGRQASALDIQREYHAKAVEHLRNREPDPQVEQVVDLWGRTLDAVEAQDFAKVDTEIDWVIKRKLFQRYQDRHGFDLSDPKIAQLDLAYHDIKRGRGVFDVLQRKGLVKRVTEDETIDDAVENPPQTTRAKLRGDFITAAQAAGRDFTVDWVHLKLNDQAQRTVLCKDPFRSVDERVERLIASM.

Glu4 serves as a coordination point for Mg(2+). Arg48 is a binding site for ATP. Tyr50 lines the Mg(2+) pocket. Asp52 (proton acceptor) is an active-site residue. Residue Glu58 coordinates Mg(2+). Residues Thr61 and Trp414 each coordinate ATP.

This sequence belongs to the Pup ligase/Pup deamidase family. Pup-conjugating enzyme subfamily.

It catalyses the reaction ATP + [prokaryotic ubiquitin-like protein]-L-glutamate + [protein]-L-lysine = ADP + phosphate + N(6)-([prokaryotic ubiquitin-like protein]-gamma-L-glutamyl)-[protein]-L-lysine.. Its pathway is protein degradation; proteasomal Pup-dependent pathway. It participates in protein modification; protein pupylation. Its function is as follows. Catalyzes the covalent attachment of the prokaryotic ubiquitin-like protein modifier Pup to the proteasomal substrate proteins, thereby targeting them for proteasomal degradation. This tagging system is termed pupylation. The ligation reaction involves the side-chain carboxylate of the C-terminal glutamate of Pup and the side-chain amino group of a substrate lysine. This is Pup--protein ligase 2 from Rhodococcus erythropolis (Arthrobacter picolinophilus).